We begin with the raw amino-acid sequence, 206 residues long: Ras-related protein Rab-18 (206 aa).

Position 1 is an N-acetylmethionine (Met-1). Ser-17, Gly-20, Lys-21, Ser-22, Ser-23, Asp-34, Pro-35, Thr-40, Gly-66, Lys-123, and Asp-125 together coordinate GTP. Ser-22 is a binding site for Mg(2+). Short sequence motifs (switch) lie at residues 31–45 (DTFD…GVDF) and 63–80 (DTAG…YYRG). Thr-40 is a binding site for Mg(2+). Ser-144 is subject to Phosphoserine. GTP is bound at residue Ala-152. Cys-199 is lipidated: S-palmitoyl cysteine. The residue at position 203 (Cys-203) is a Cysteine methyl ester. Residue Cys-203 is the site of S-geranylgeranyl cysteine attachment. A propeptide spans 204–206 (SVL) (removed in mature form).

The protein belongs to the small GTPase superfamily. Rab family. Interacts (in GTP-bound form) with ZFYVE1. Interacts with ZW10 and this interaction is enhanced in the presence of ZFYVE1. Interacts with BSCL2. The cofactor is Mg(2+).

It localises to the endoplasmic reticulum membrane. Its subcellular location is the golgi apparatus. The protein resides in the cis-Golgi network membrane. It is found in the lipid droplet. The protein localises to the apical cell membrane. It carries out the reaction GTP + H2O = GDP + phosphate + H(+). Regulated by guanine nucleotide exchange factors (GEFs) which promote the exchange of bound GDP for free GTP. Regulated by GTPase activating proteins (GAPs) which increase the GTP hydrolysis activity at the ER membrane. Inhibited by GDP dissociation inhibitors (GDIs) which prevent Rab-GDP dissociation. In terms of biological role, the small GTPases Rab are key regulators of intracellular membrane trafficking, from the formation of transport vesicles to their fusion with membranes. Rabs cycle between an inactive GDP-bound form and an active GTP-bound form that is able to recruit to membranes different sets of downstream effectors directly responsible for vesicle formation, movement, tethering and fusion. RAB18 is required for the localization of ZFYVE1 to lipid droplets and for its function in mediating the formation of endoplasmic reticulum-lipid droplets (ER-LD) contacts. Also required for maintaining endoplasmic reticulum structure. Plays a role in apical endocytosis/recycling. Plays a key role in eye and brain development and neurodegeneration. In Rattus norvegicus (Rat), this protein is Ras-related protein Rab-18.